Here is a 376-residue protein sequence, read N- to C-terminus: Putative E3 ubiquitin-protein ligase XBAT34 (376 aa).

ANK repeat units follow at residues 41–71 (LGRT…NVNA) and 77–106 (NGGT…NPLV). The segment at 325 to 364 (CVICVDAPSEAVCVPCGHVAGCISCLKEIENKKMGCPVCR) adopts an RING-type zinc-finger fold.

The catalysed reaction is S-ubiquitinyl-[E2 ubiquitin-conjugating enzyme]-L-cysteine + [acceptor protein]-L-lysine = [E2 ubiquitin-conjugating enzyme]-L-cysteine + N(6)-ubiquitinyl-[acceptor protein]-L-lysine.. The protein operates within protein modification; protein ubiquitination. No E3 ubiquitin-protein ligase activity observed when associated with the E2 enzyme UBC8 in vitro. In Arabidopsis thaliana (Mouse-ear cress), this protein is Putative E3 ubiquitin-protein ligase XBAT34 (XBAT34).